The following is a 253-amino-acid chain: MKRFNVSYVEVIKNGETISSCFQPFQKNENYGTITSANEQITPVIFHNLIMDMVLPKVVPIKGNKVTKMSMNLIDGFDCFYSTDDHDPKTVYVCFTLVDMPKILPIRILSGLQEYESNATNELLSSHVGQILDSFHEELVEYRNQTLNSSGNGQSSNGNGQNTISDIGDATEDQIKDVIQIMNDNIDKFLERQERVSLLVDKTSQLNSSSNKFRRKAVNIKEIMWWQKVKNITLLTFTIILFVSAAFMFFYLW.

At 1 to 231 (MKRFNVSYVE…EIMWWQKVKN (231 aa)) the chain is on the cytoplasmic side. Residues 147–166 (LNSSGNGQSSNGNGQNTISD) are disordered. Low complexity predominate over residues 148 to 162 (NSSGNGQSSNGNGQN). The 61-residue stretch at 167 to 227 (IGDATEDQIK…VNIKEIMWWQ (61 aa)) folds into the v-SNARE coiled-coil homology domain. A helical; Anchor for type IV membrane protein transmembrane segment spans residues 232–252 (ITLLTFTIILFVSAAFMFFYL). Trp-253 is a topological domain (vacuolar).

It belongs to the synaptobrevin family. In terms of assembly, present in a pentameric cis-SNARE complex composed of the v-SNAREs NYV1, VTI1 and YKT6, and the t-SNAREs VAM3 and VAM7 on vacuolar membranes. Interacts in trans with the cognate t-SNARE VAM3 during the docking step of homotypic vacuolar fusion. Interacts with the vacuolar transporter chaperone (VTC) complex and the vacuolar Ca(2+)-ATPase PMC1.

Its subcellular location is the vacuole membrane. In terms of biological role, vacuolar v-SNARE required for docking. Only involved in homotypic vacuole fusion. Required for Ca(2+) efflux from the vacuolar lumen, a required signal for subsequent membrane fusion events, by inhibiting vacuolar Ca(2+)-ATPase PMC1 and promoting Ca(2+) release when forming trans-SNARE assemblies during the docking step. This Saccharomyces cerevisiae (strain ATCC 204508 / S288c) (Baker's yeast) protein is Vacuolar v-SNARE NYV1 (NYV1).